The chain runs to 206 residues: Small ribosomal subunit protein uS4 (206 aa).

One can recognise an S4 RNA-binding domain in the interval 96–159 (TRLDNVVYRM…KKQARISASL (64 aa)).

It belongs to the universal ribosomal protein uS4 family. In terms of assembly, part of the 30S ribosomal subunit. Contacts protein S5. The interaction surface between S4 and S5 is involved in control of translational fidelity.

One of the primary rRNA binding proteins, it binds directly to 16S rRNA where it nucleates assembly of the body of the 30S subunit. Its function is as follows. With S5 and S12 plays an important role in translational accuracy. The chain is Small ribosomal subunit protein uS4 from Shewanella violacea.